The chain runs to 105 residues: Pyruvate synthase subunit PorD (105 aa).

4Fe-4S ferredoxin-type domains are found at residues Phe44–Glu73 and Gly74–Glu103. [4Fe-4S] cluster-binding residues include Cys53, Cys56, Cys59, Cys63, Cys83, Cys86, Cys89, and Cys93.

As to quaternary structure, heterotetramer of one alpha, one beta, one delta and one gamma chain. [4Fe-4S] cluster is required as a cofactor.

The chain is Pyruvate synthase subunit PorD (porD) from Pyrococcus abyssi (strain GE5 / Orsay).